The chain runs to 420 residues: ATP phosphoribosyltransferase regulatory subunit (420 aa).

The protein belongs to the class-II aminoacyl-tRNA synthetase family. HisZ subfamily. In terms of assembly, heteromultimer composed of HisG and HisZ subunits.

The protein localises to the cytoplasm. It participates in amino-acid biosynthesis; L-histidine biosynthesis; L-histidine from 5-phospho-alpha-D-ribose 1-diphosphate: step 1/9. In terms of biological role, required for the first step of histidine biosynthesis. May allow the feedback regulation of ATP phosphoribosyltransferase activity by histidine. The protein is ATP phosphoribosyltransferase regulatory subunit of Bacillus cereus (strain ZK / E33L).